The primary structure comprises 885 residues: Alanine--tRNA ligase (885 aa).

4 residues coordinate Zn(2+): His571, His575, Cys674, and His678.

It belongs to the class-II aminoacyl-tRNA synthetase family. Zn(2+) is required as a cofactor.

The protein localises to the cytoplasm. The enzyme catalyses tRNA(Ala) + L-alanine + ATP = L-alanyl-tRNA(Ala) + AMP + diphosphate. In terms of biological role, catalyzes the attachment of alanine to tRNA(Ala) in a two-step reaction: alanine is first activated by ATP to form Ala-AMP and then transferred to the acceptor end of tRNA(Ala). Also edits incorrectly charged Ser-tRNA(Ala) and Gly-tRNA(Ala) via its editing domain. This is Alanine--tRNA ligase from Clavibacter sepedonicus (Clavibacter michiganensis subsp. sepedonicus).